Consider the following 77-residue polypeptide: Conotoxin ArMKLT2-0122 (77 aa).

Residues 1-22 (MKLTCVLIVAVLFLTACQLIAA) form the signal peptide. The propeptide occupies 23–44 (DDSRDLKRFSRRKMRDGMLNTK). 3 disulfides stabilise this stretch: cysteine 50–cysteine 65, cysteine 57–cysteine 68, and cysteine 64–cysteine 73.

This sequence belongs to the conotoxin O1 superfamily. As to expression, expressed by the venom duct.

The protein resides in the secreted. The polypeptide is Conotoxin ArMKLT2-0122 (Conus arenatus (Sand-dusted cone)).